We begin with the raw amino-acid sequence, 106 residues long: Thioredoxin-like protein YusE (106 aa).

The 101-residue stretch at 1 to 101 (MKELQEHELD…LYELIKQKSS (101 aa)) folds into the Thioredoxin domain. A disulfide bridge links C26 with C29.

In Bacillus subtilis (strain 168), this protein is Thioredoxin-like protein YusE (yusE).